The chain runs to 156 residues: MQIIEGKLQLQGNEKIAILTSRFNHIITDRLKEGAMDCFKRHGGDEELLDLVLVPGAYELPLILDKLLESGKYDGVCVLGAIIRGGTPHFDYVSAEATKGIASAMLKYSMPVSFGVLTTDNIEQAIERAGSKAGNKGFEAMSTLIELLSLCQTLKD.

Residues Phe23, 57–59, and 81–83 each bind 5-amino-6-(D-ribitylamino)uracil; these read AYE and AII. 86-87 lines the (2S)-2-hydroxy-3-oxobutyl phosphate pocket; that stretch reads GT. His89 serves as the catalytic Proton donor. Phe114 is a 5-amino-6-(D-ribitylamino)uracil binding site. Residue Arg128 participates in (2S)-2-hydroxy-3-oxobutyl phosphate binding.

This sequence belongs to the DMRL synthase family.

The catalysed reaction is (2S)-2-hydroxy-3-oxobutyl phosphate + 5-amino-6-(D-ribitylamino)uracil = 6,7-dimethyl-8-(1-D-ribityl)lumazine + phosphate + 2 H2O + H(+). It participates in cofactor biosynthesis; riboflavin biosynthesis; riboflavin from 2-hydroxy-3-oxobutyl phosphate and 5-amino-6-(D-ribitylamino)uracil: step 1/2. Its function is as follows. Catalyzes the formation of 6,7-dimethyl-8-ribityllumazine by condensation of 5-amino-6-(D-ribitylamino)uracil with 3,4-dihydroxy-2-butanone 4-phosphate. This is the penultimate step in the biosynthesis of riboflavin. The protein is 6,7-dimethyl-8-ribityllumazine synthase of Helicobacter pylori (strain J99 / ATCC 700824) (Campylobacter pylori J99).